Reading from the N-terminus, the 380-residue chain is Crotonobetainyl-CoA reductase (380 aa).

This sequence belongs to the acyl-CoA dehydrogenase family. As to quaternary structure, homotetramer. FAD is required as a cofactor.

It localises to the cytoplasm. It catalyses the reaction 4-(trimethylamino)butanoyl-CoA + oxidized [electron-transfer flavoprotein] + H(+) = crotonobetainyl-CoA + reduced [electron-transfer flavoprotein]. It functions in the pathway amine and polyamine metabolism; carnitine metabolism. Functionally, catalyzes the reduction of crotonobetainyl-CoA to gamma-butyrobetainyl-CoA. In Salmonella arizonae (strain ATCC BAA-731 / CDC346-86 / RSK2980), this protein is Crotonobetainyl-CoA reductase.